We begin with the raw amino-acid sequence, 509 residues long: ATP synthase subunit alpha (509 aa).

An ATP-binding site is contributed by 169-176 (GDRQTGKT).

Belongs to the ATPase alpha/beta chains family. F-type ATPases have 2 components, CF(1) - the catalytic core - and CF(0) - the membrane proton channel. CF(1) has five subunits: alpha(3), beta(3), gamma(1), delta(1), epsilon(1). CF(0) has three main subunits: a(1), b(2) and c(9-12). The alpha and beta chains form an alternating ring which encloses part of the gamma chain. CF(1) is attached to CF(0) by a central stalk formed by the gamma and epsilon chains, while a peripheral stalk is formed by the delta and b chains.

It localises to the cell inner membrane. The catalysed reaction is ATP + H2O + 4 H(+)(in) = ADP + phosphate + 5 H(+)(out). Its function is as follows. Produces ATP from ADP in the presence of a proton gradient across the membrane. The alpha chain is a regulatory subunit. The chain is ATP synthase subunit alpha from Rhizobium meliloti (strain 1021) (Ensifer meliloti).